The sequence spans 172 residues: Small acidic protein (172 aa).

The interval 1–160 (MSSARESQAR…VPETKKEAKS (160 aa)) is disordered. Over residues 46-76 (GKKEHTGRLVIGDHRSTSHFRTGEEDKKMNE) the composition is skewed to basic and acidic residues. Over residues 80–92 (SQYQQSMDSTMSG) the composition is skewed to polar residues. Composition is skewed to basic and acidic residues over residues 112 to 122 (AAGHSSDHESS) and 144 to 160 (ETHD…EAKS).

Belongs to the SMAP family. Expressed in brain, heart, eye, liver, kidney and skeletal muscle.

The protein is Small acidic protein (SMAP) of Gallus gallus (Chicken).